The following is a 293-amino-acid chain: Small ribosomal subunit protein uS5 (293 aa).

The disordered stretch occupies residues 1-56 (MADDAGAAGGPGGPGGPGMGGRGGFRGGFGSGVRGRGRGRGRGRGRGRGARGGKAE). Ala2 is subject to N-acetylalanine. The span at 7–34 (AAGGPGGPGGPGMGGRGGFRGGFGSGVR) shows a compositional bias: gly residues. Over residues 35–51 (GRGRGRGRGRGRGRGAR) the composition is skewed to basic residues. Residues Lys54 and Lys58 each participate in a glycyl lysine isopeptide (Lys-Gly) (interchain with G-Cter in ubiquitin) cross-link. The 64-residue stretch at 102–165 (LKDEVLKIMP…ILAKLSIVPV (64 aa)) folds into the S5 DRBM domain. At Thr252 the chain carries Phosphothreonine. Lys263 is modified (N6-acetyllysine). Ser264 bears the Phosphoserine mark. A Phosphothreonine modification is found at Thr270. N6-acetyllysine; alternate is present on Lys275. A Glycyl lysine isopeptide (Lys-Gly) (interchain with G-Cter in SUMO1); alternate cross-link involves residue Lys275. Lys275 is covalently cross-linked (Glycyl lysine isopeptide (Lys-Gly) (interchain with G-Cter in SUMO2); alternate). Lys275 participates in a covalent cross-link: Glycyl lysine isopeptide (Lys-Gly) (interchain with G-Cter in ubiquitin); alternate. The residue at position 281 (Ser281) is a Phosphoserine.

The protein belongs to the universal ribosomal protein uS5 family. Component of the small ribosomal subunit. Interacts with zinc finger protein ZNF277 (via zinc-finger domains); the interaction is direct; the interaction is extra-ribosomal. Interaction with ZNF277 competes with the binding of RPS2 to protein arginine methyltransferase PRMT3. In terms of processing, citrullinated by PADI4 in the Arg/Gly-rich region. Asymmetric arginine dimethylation by PRMT3 occurs at multiple sites in the Arg/Gly-rich region. Post-translationally, monoubiquitinated at Lys-54 and Lys-58 by RNF10 when a ribosome has stalled during translation, leading to its degradation by the proteasome. Deubiquitinated at Lys-54 and Lys-58 by USP10, preventing degradation by the proteasome and promoting 40S ribosome subunit recycling following ribosome dissociation.

The protein resides in the cytoplasm. It localises to the nucleus. Its subcellular location is the nucleolus. Its function is as follows. Component of the ribosome, a large ribonucleoprotein complex responsible for the synthesis of proteins in the cell. The small ribosomal subunit (SSU) binds messenger RNAs (mRNAs) and translates the encoded message by selecting cognate aminoacyl-transfer RNA (tRNA) molecules. The large subunit (LSU) contains the ribosomal catalytic site termed the peptidyl transferase center (PTC), which catalyzes the formation of peptide bonds, thereby polymerizing the amino acids delivered by tRNAs into a polypeptide chain. The nascent polypeptides leave the ribosome through a tunnel in the LSU and interact with protein factors that function in enzymatic processing, targeting, and the membrane insertion of nascent chains at the exit of the ribosomal tunnel. Plays a role in the assembly and function of the 40S ribosomal subunit. Mutations in this protein affects the control of translational fidelity. Involved in nucleolar processing of pre-18S ribosomal RNA and ribosome assembly. This Bos taurus (Bovine) protein is Small ribosomal subunit protein uS5 (RPS2).